Reading from the N-terminus, the 396-residue chain is Deoxyuridine 5'-triphosphate nucleotidohydrolase (396 aa).

Substrate contacts are provided by residues 280 to 282 and 380 to 381; these read RSS and FG.

It belongs to the dUTPase family. Requires Mg(2+) as cofactor.

It catalyses the reaction dUTP + H2O = dUMP + diphosphate + H(+). Its function is as follows. Involved in nucleotide metabolism: produces dUMP, the immediate precursor of thymidine nucleotides and decreases the intracellular concentration of dUTP to avoid uracil incorporation into viral DNA. The protein is Deoxyuridine 5'-triphosphate nucleotidohydrolase of Homo sapiens (Human).